Consider the following 426-residue polypeptide: MALKMDKSKELFEEAKKYLVGGVNSPVRYFKPYPFFVEKAKDCYLFDVDGNCYIDYCLAYGPMVLGHANDAVIKAVKEQLELGSAYGCPTEKEIILAKEVVKRVPCAEMVRFVNSGTEATMSAIRLARGVTGRKKIIKFDGAYHGAHDYVLVKSGSGALTHGHPNSPGIPEETTKNTILIPFNDEDAVKKAINENKDEIACIIVEPIMGNVGCILPKEGYLEFLREITEENDILLIFDEVITGFRLAKGGAQEYFGVVPDIATLGKILGGGFPIGAIVGRRELMEQFSPLGAIYQAGTFNGNPISITAGIATLKQLDDRFYKETARTAKILADTLRELADKHNIKAKVYNIASMFQIYFNDKEVVNYEIAKQSDTEKFMKYFWRLLEKGVFVPPSQFECCFTSIKHDDEVVDKTIKAMEDVFEGLE.

K266 carries the post-translational modification N6-(pyridoxal phosphate)lysine.

It belongs to the class-III pyridoxal-phosphate-dependent aminotransferase family. HemL subfamily. Pyridoxal 5'-phosphate is required as a cofactor.

It is found in the cytoplasm. It catalyses the reaction (S)-4-amino-5-oxopentanoate = 5-aminolevulinate. It functions in the pathway porphyrin-containing compound metabolism; protoporphyrin-IX biosynthesis; 5-aminolevulinate from L-glutamyl-tRNA(Glu): step 2/2. The protein is Glutamate-1-semialdehyde 2,1-aminomutase (hemL) of Methanocaldococcus jannaschii (strain ATCC 43067 / DSM 2661 / JAL-1 / JCM 10045 / NBRC 100440) (Methanococcus jannaschii).